We begin with the raw amino-acid sequence, 286 residues long: 2-dehydro-3-deoxyphosphooctonate aldolase (286 aa).

Belongs to the KdsA family.

The protein resides in the cytoplasm. The enzyme catalyses D-arabinose 5-phosphate + phosphoenolpyruvate + H2O = 3-deoxy-alpha-D-manno-2-octulosonate-8-phosphate + phosphate. The protein operates within carbohydrate biosynthesis; 3-deoxy-D-manno-octulosonate biosynthesis; 3-deoxy-D-manno-octulosonate from D-ribulose 5-phosphate: step 2/3. Its pathway is bacterial outer membrane biogenesis; lipopolysaccharide biosynthesis. The polypeptide is 2-dehydro-3-deoxyphosphooctonate aldolase (Haemophilus ducreyi (strain 35000HP / ATCC 700724)).